A 202-amino-acid chain; its full sequence is MAMNGLSKMAVAAATALLLVLTIVPGAVAVTYTIEWTTGVDYSGWATGKTFRVGDILEFKYGSSHTVDVVDKAGYDGCDASSSTENHSDGDTKIDLKTVGINYFICSTPGHCRTNGGMKLAVNVVAGSAGPPATPTPPSSTPGTPTTPESPPSGGSPTPTTPTPGAGSTSPPPPPKASGASKGVMSYVLVGVSMVLGYGLWM.

The first 29 residues, 1 to 29 (MAMNGLSKMAVAAATALLLVLTIVPGAVA), serve as a signal peptide directing secretion. In terms of domain architecture, Phytocyanin spans 30 to 126 (VTYTIEWTTG…GMKLAVNVVA (97 aa)). Histidine 65 contributes to the Cu cation binding site. A glycan (N-linked (GlcNAc...) asparagine) is linked at asparagine 86. 3 residues coordinate Cu cation: cysteine 106, histidine 111, and methionine 118. Positions 129-181 (AGPPATPTPPSSTPGTPTTPESPPSGGSPTPTTPTPGAGSTSPPPPPKASGAS) are disordered. Residues 141 to 169 (TPGTPTTPESPPSGGSPTPTTPTPGAGST) show a composition bias toward low complexity. Residue serine 178 is the site of GPI-anchor amidated serine attachment. The propeptide at 179 to 202 (GASKGVMSYVLVGVSMVLGYGLWM) is removed in mature form.

The protein resides in the cell membrane. Functionally, probably acts as an electron carrier involved in oxygen activation and/or lignin formation. The chain is Uclacyanin-2 from Arabidopsis thaliana (Mouse-ear cress).